The chain runs to 455 residues: Ribulose bisphosphate carboxylase large chain (455 aa).

N6,N6,N6-trimethyllysine is present on K5. Substrate is bound by residues N114 and T164. K166 acts as the Proton acceptor in catalysis. K168 serves as a coordination point for substrate. Mg(2+) is bound by residues K192, D194, and E195. K192 is modified (N6-carboxylysine). Residue H285 is the Proton acceptor of the active site. Substrate contacts are provided by R286, H318, and S370.

This sequence belongs to the RuBisCO large chain family. Type I subfamily. Heterohexadecamer of 8 large chains and 8 small chains; disulfide-linked. The disulfide link is formed within the large subunit homodimers. Requires Mg(2+) as cofactor. Post-translationally, the disulfide bond which can form in the large chain dimeric partners within the hexadecamer appears to be associated with oxidative stress and protein turnover.

It localises to the plastid. The protein localises to the chloroplast. The enzyme catalyses 2 (2R)-3-phosphoglycerate + 2 H(+) = D-ribulose 1,5-bisphosphate + CO2 + H2O. The catalysed reaction is D-ribulose 1,5-bisphosphate + O2 = 2-phosphoglycolate + (2R)-3-phosphoglycerate + 2 H(+). Functionally, ruBisCO catalyzes two reactions: the carboxylation of D-ribulose 1,5-bisphosphate, the primary event in carbon dioxide fixation, as well as the oxidative fragmentation of the pentose substrate in the photorespiration process. Both reactions occur simultaneously and in competition at the same active site. The chain is Ribulose bisphosphate carboxylase large chain from Brownea coccinea (Rose of Venezuela).